A 413-amino-acid chain; its full sequence is 2,3-bisphosphoglycerate-independent phosphoglycerate mutase (413 aa).

This sequence belongs to the BPG-independent phosphoglycerate mutase family. A-PGAM subfamily.

It catalyses the reaction (2R)-2-phosphoglycerate = (2R)-3-phosphoglycerate. Its pathway is carbohydrate degradation; glycolysis; pyruvate from D-glyceraldehyde 3-phosphate: step 3/5. Catalyzes the interconversion of 2-phosphoglycerate and 3-phosphoglycerate. The chain is 2,3-bisphosphoglycerate-independent phosphoglycerate mutase from Sulfolobus acidocaldarius (strain ATCC 33909 / DSM 639 / JCM 8929 / NBRC 15157 / NCIMB 11770).